The primary structure comprises 277 residues: Pantothenate synthetase (277 aa).

26–33 is an ATP binding site; sequence MGNLHAGH. His-33 acts as the Proton donor in catalysis. A (R)-pantoate-binding site is contributed by Gln-57. Gln-57 contributes to the beta-alanine binding site. 143–146 is a binding site for ATP; sequence GEKD. A (R)-pantoate-binding site is contributed by Gln-149. ATP is bound by residues Val-172 and 180 to 183; that span reads LSSR.

This sequence belongs to the pantothenate synthetase family. As to quaternary structure, homodimer.

The protein resides in the cytoplasm. The enzyme catalyses (R)-pantoate + beta-alanine + ATP = (R)-pantothenate + AMP + diphosphate + H(+). It participates in cofactor biosynthesis; (R)-pantothenate biosynthesis; (R)-pantothenate from (R)-pantoate and beta-alanine: step 1/1. In terms of biological role, catalyzes the condensation of pantoate with beta-alanine in an ATP-dependent reaction via a pantoyl-adenylate intermediate. The protein is Pantothenate synthetase of Nitrosomonas europaea (strain ATCC 19718 / CIP 103999 / KCTC 2705 / NBRC 14298).